The chain runs to 366 residues: tRNA (guanine(26)-N(2))-dimethyltransferase (366 aa).

The tract at residues 1–28 (MEVSEGSVTVEVPEERHGASEGSGEGVF) is disordered. Residues 1 to 365 (MEVSEGSVTV…ADVADIRNAV (365 aa)) enclose the Trm1 methyltransferase domain. S-adenosyl-L-methionine-binding residues include arginine 37, arginine 64, and aspartate 79. The Zn(2+) site is built by cysteine 234, cysteine 237, cysteine 254, and cysteine 257.

Belongs to the class I-like SAM-binding methyltransferase superfamily. Trm1 family.

It catalyses the reaction guanosine(26) in tRNA + 2 S-adenosyl-L-methionine = N(2)-dimethylguanosine(26) in tRNA + 2 S-adenosyl-L-homocysteine + 2 H(+). Dimethylates a single guanine residue at position 26 of a number of tRNAs using S-adenosyl-L-methionine as donor of the methyl groups. The protein is tRNA (guanine(26)-N(2))-dimethyltransferase of Natronomonas pharaonis (strain ATCC 35678 / DSM 2160 / CIP 103997 / JCM 8858 / NBRC 14720 / NCIMB 2260 / Gabara) (Halobacterium pharaonis).